Reading from the N-terminus, the 193-residue chain is Intracellular heme transport protein HutX (193 aa).

Residue tyrosine 116 coordinates heme.

As to quaternary structure, homodimer. Interacts with HutZ.

The protein resides in the cytoplasm. Functionally, binds heme. Heme is transferred to the heme-degrading enzyme HutZ via a specific protein-protein interaction. This chain is Intracellular heme transport protein HutX, found in Vibrio cholerae serotype O1 (strain ATCC 39315 / El Tor Inaba N16961).